The following is a 164-amino-acid chain: Lipoprotein signal peptidase (164 aa).

2 helical membrane passes run Thr68–Ala88 and Phe96–Phe116. Catalysis depends on residues Asp121 and Asp139. Residues Thr134 to Leu154 traverse the membrane as a helical segment.

Belongs to the peptidase A8 family.

The protein resides in the cell inner membrane. It catalyses the reaction Release of signal peptides from bacterial membrane prolipoproteins. Hydrolyzes -Xaa-Yaa-Zaa-|-(S,diacylglyceryl)Cys-, in which Xaa is hydrophobic (preferably Leu), and Yaa (Ala or Ser) and Zaa (Gly or Ala) have small, neutral side chains.. Its pathway is protein modification; lipoprotein biosynthesis (signal peptide cleavage). This protein specifically catalyzes the removal of signal peptides from prolipoproteins. In Solibacter usitatus (strain Ellin6076), this protein is Lipoprotein signal peptidase.